A 417-amino-acid polypeptide reads, in one-letter code: UDP-N-acetylglucosamine 1-carboxyvinyltransferase 2 (417 aa).

Residue 22-23 (KN) coordinates phosphoenolpyruvate. UDP-N-acetyl-alpha-D-glucosamine is bound at residue R92. C116 functions as the Proton donor in the catalytic mechanism. C116 is modified (2-(S-cysteinyl)pyruvic acid O-phosphothioketal). UDP-N-acetyl-alpha-D-glucosamine contacts are provided by residues 121 to 125 (RPIDL), D305, and I327.

This sequence belongs to the EPSP synthase family. MurA subfamily.

The protein resides in the cytoplasm. It catalyses the reaction phosphoenolpyruvate + UDP-N-acetyl-alpha-D-glucosamine = UDP-N-acetyl-3-O-(1-carboxyvinyl)-alpha-D-glucosamine + phosphate. The protein operates within cell wall biogenesis; peptidoglycan biosynthesis. Its function is as follows. Cell wall formation. Adds enolpyruvyl to UDP-N-acetylglucosamine. The sequence is that of UDP-N-acetylglucosamine 1-carboxyvinyltransferase 2 from Caldanaerobacter subterraneus subsp. tengcongensis (strain DSM 15242 / JCM 11007 / NBRC 100824 / MB4) (Thermoanaerobacter tengcongensis).